The following is a 767-amino-acid chain: Probable beta-D-xylosidase 7 (767 aa).

The first 19 residues, 1–19, serve as a signal peptide directing secretion; the sequence is MAKQLLLLLLLFIVHGVES. N-linked (GlcNAc...) asparagine glycosylation occurs at N100. Residue D292 is part of the active site. N643 is a glycosylation site (N-linked (GlcNAc...) asparagine).

This sequence belongs to the glycosyl hydrolase 3 family.

It localises to the secreted. Its subcellular location is the extracellular space. It is found in the extracellular matrix. In Arabidopsis thaliana (Mouse-ear cress), this protein is Probable beta-D-xylosidase 7 (BXL7).